We begin with the raw amino-acid sequence, 220 residues long: Uracil-DNA glycosylase (220 aa).

The active-site Proton acceptor is the Asp65.

It belongs to the uracil-DNA glycosylase (UDG) superfamily. UNG family.

The protein localises to the cytoplasm. It catalyses the reaction Hydrolyzes single-stranded DNA or mismatched double-stranded DNA and polynucleotides, releasing free uracil.. Excises uracil residues from the DNA which can arise as a result of misincorporation of dUMP residues by DNA polymerase or due to deamination of cytosine. The chain is Uracil-DNA glycosylase from Azobacteroides pseudotrichonymphae genomovar. CFP2.